A 531-amino-acid chain; its full sequence is Berberine bridge enzyme-like 9 (531 aa).

Positions M1 to A23 are cleaved as a signal peptide. Cysteines 35 and 99 form a disulfide. N-linked (GlcNAc...) asparagine glycans are attached at residues N76, N164, N271, N300, N314, N400, and N485. One can recognise an FAD-binding PCMH-type domain in the interval M77–V252. A cross-link (6-(S-cysteinyl)-8alpha-(pros-histidyl)-FAD (His-Cys)) is located at residues H114–C177.

Belongs to the oxygen-dependent FAD-linked oxidoreductase family. The cofactor is FAD. Post-translationally, the FAD cofactor is bound via a bicovalent 6-S-cysteinyl, 8alpha-N1-histidyl FAD linkage. As to expression, accumulates in cell walls of etiolated hypocotyls.

The protein resides in the secreted. Its subcellular location is the cell wall. The polypeptide is Berberine bridge enzyme-like 9 (Arabidopsis thaliana (Mouse-ear cress)).